The following is a 316-amino-acid chain: Ubiquinol oxidase, mitochondrial (316 aa).

The transit peptide at 1–26 (MGVRAQPLLARSLITTTQPWILSARS) directs the protein to the mitochondrion. Residues 124–144 (VHRAVVLETVAAVPGMVAGML) traverse the membrane as a helical segment. 3 residues coordinate Fe cation: glutamate 131, glutamate 170, and histidine 173. A helical transmembrane segment spans residues 189–209 (MLVALVQTLFFNVYFLAYMLF). 3 residues coordinate Fe cation: glutamate 221, glutamate 272, and histidine 275.

It belongs to the alternative oxidase family. Fe cation is required as a cofactor.

The protein resides in the mitochondrion inner membrane. The enzyme catalyses 2 a ubiquinol + O2 = 2 a ubiquinone + 2 H2O. Its function is as follows. Alternative oxidase which function may be to reoxidize reducing equivalents produced by glycolysis such as ubiquinol. The chain is Ubiquinol oxidase, mitochondrial (AOX) from Batrachochytrium dendrobatidis (strain JAM81 / FGSC 10211) (Frog chytrid fungus).